A 311-amino-acid chain; its full sequence is MLTTEKLVKLLKLELFTGEKGLHKPIKNTDISRPGLEMAGYFSHYAADRIQLLGTTELSFYNLLPDEERHGRMRKLCRPETPAIIVTRGLEPPQELIDAAQEMDTPLIVSKDATTSLMSRLTTFLEHELAKTTSLHGVLVDVYGVGVLITGDSGIGKSETALELVKRGHRLVADDNVEIREITKDELIGTPPKLIEHLLEIRGLGIINVMTLFGAGSILTQKQIRLNINLENWDKDKLYDRVGLNEETLQILDTEITKKTIPVRPGRNVAVIIEVAAMNYRLNIMGINTAEEFNQRLNEEILKKGHQSKEN.

Active-site residues include H136 and K157. An ATP-binding site is contributed by 151–158 (GDSGIGKS). S158 contacts Mg(2+). D175 functions as the Proton acceptor; for phosphorylation activity. Proton donor; for dephosphorylation activity in the catalytic mechanism. An important for the catalytic mechanism of both phosphorylation and dephosphorylation region spans residues 199–208 (LEIRGLGIIN). Residue E200 coordinates Mg(2+). The active site involves R241. The tract at residues 262 to 267 (PVRPGR) is important for the catalytic mechanism of dephosphorylation.

It belongs to the HPrK/P family. In terms of assembly, homohexamer. Mg(2+) is required as a cofactor.

It carries out the reaction [HPr protein]-L-serine + ATP = [HPr protein]-O-phospho-L-serine + ADP + H(+). The enzyme catalyses [HPr protein]-O-phospho-L-serine + phosphate + H(+) = [HPr protein]-L-serine + diphosphate. Catalyzes the ATP- as well as the pyrophosphate-dependent phosphorylation of a specific serine residue in HPr, a phosphocarrier protein of the phosphoenolpyruvate-dependent sugar phosphotransferase system (PTS). HprK/P also catalyzes the pyrophosphate-producing, inorganic phosphate-dependent dephosphorylation (phosphorolysis) of seryl-phosphorylated HPr (P-Ser-HPr). The two antagonistic activities of HprK/P are regulated by several intracellular metabolites, which change their concentration in response to the absence or presence of rapidly metabolisable carbon sources (glucose, fructose, etc.) in the growth medium. Therefore, by controlling the phosphorylation state of HPr, HPrK/P is a sensor enzyme that plays a major role in the regulation of carbon metabolism and sugar transport: it mediates carbon catabolite repression (CCR), and regulates PTS-catalyzed carbohydrate uptake and inducer exclusion. The chain is HPr kinase/phosphorylase from Staphylococcus haemolyticus (strain JCSC1435).